A 147-amino-acid polypeptide reads, in one-letter code: Hemoglobin subunit beta (147 aa).

At Val2 the chain carries N-acetylvaline. One can recognise a Globin domain in the interval 3–147; the sequence is HLTPEEKSAV…VANALAHKYH (145 aa). Phosphothreonine is present on Thr13. The residue at position 45 (Ser45) is a Phosphoserine. Residue Lys60 is modified to N6-acetyllysine. Residue His64 participates in heme b binding. Position 83 is an N6-acetyllysine (Lys83). His93 provides a ligand contact to heme b. Cys94 is subject to S-nitrosocysteine. An N6-acetyllysine modification is found at Lys145.

Belongs to the globin family. In terms of assembly, heterotetramer of two alpha chains and two beta chains in adult hemoglobin A (HbA). As to expression, red blood cells.

Its function is as follows. Involved in oxygen transport from the lung to the various peripheral tissues. The sequence is that of Hemoglobin subunit beta (HBB) from Pan paniscus (Pygmy chimpanzee).